A 28-amino-acid chain; its full sequence is Phospholipase A2 2 (28 aa).

Belongs to the phospholipase A2 family. Group I subfamily. Requires Ca(2+) as cofactor. Expressed by the venom gland.

It localises to the secreted. The enzyme catalyses a 1,2-diacyl-sn-glycero-3-phosphocholine + H2O = a 1-acyl-sn-glycero-3-phosphocholine + a fatty acid + H(+). Functionally, snake venom phospholipase A2 (PLA2) that inhibits neuromuscular transmission by blocking acetylcholine release from the nerve termini. PLA2 catalyzes the calcium-dependent hydrolysis of the 2-acyl groups in 3-sn-phosphoglycerides. This Micrurus nigrocinctus (Central American coral snake) protein is Phospholipase A2 2.